The following is a 157-amino-acid chain: Thioredoxin-T (157 aa).

In terms of domain architecture, Thioredoxin spans 2-107 (VYPVRNKDDL…LAKLMEKHAG (106 aa)). Cys-32 and Cys-35 are disulfide-bonded. A disordered region spans residues 132 to 157 (ESSESDNDNNNVNEVSAHDENAVLEH). Positions 147–157 (SAHDENAVLEH) are enriched in basic and acidic residues.

Belongs to the thioredoxin family. As to expression, testis specific. Not expressed in the embryo. Becomes progressively more strongly expressed during larval and pupal development. In testis, it is strongly expressed in young spermatocytes, and postmeiotic spermatid stages, then expression decreases at the nuclear elongation stage. Strongly expressed in the waste bag, in which material no longer needed for the mature sperm is eliminated. Not expressed in the stem cells and spermatogonial cells.

It is found in the nucleus. Its subcellular location is the chromosome. Functionally, probably participates in various redox reactions through the reversible oxidation of its active center dithiol to a disulfide and catalyzes dithiol-disulfide exchange reactions. Its tissue specificity suggests a regulatory role in the germline. The protein is Thioredoxin-T (TrxT) of Drosophila melanogaster (Fruit fly).